The chain runs to 146 residues: Large-conductance mechanosensitive channel (146 aa).

A run of 2 helical transmembrane segments spans residues 15-35 (VSLA…TSLV) and 81-101 (GIFI…FIII).

This sequence belongs to the MscL family. As to quaternary structure, homopentamer.

Its subcellular location is the cell membrane. Channel that opens in response to stretch forces in the membrane lipid bilayer. May participate in the regulation of osmotic pressure changes within the cell. This Clostridium beijerinckii (strain ATCC 51743 / NCIMB 8052) (Clostridium acetobutylicum) protein is Large-conductance mechanosensitive channel.